A 273-amino-acid chain; its full sequence is Large ribosomal subunit protein uL2 (273 aa).

A disordered region spans residues 224 to 260; sequence AMNPVDHPHGGGEGKTSGGRHPVTPWGKKTKGKKTRK. The segment covering 251–260 has biased composition (basic residues); that stretch reads KKTKGKKTRK.

It belongs to the universal ribosomal protein uL2 family. Part of the 50S ribosomal subunit. Forms a bridge to the 30S subunit in the 70S ribosome.

Functionally, one of the primary rRNA binding proteins. Required for association of the 30S and 50S subunits to form the 70S ribosome, for tRNA binding and peptide bond formation. It has been suggested to have peptidyltransferase activity; this is somewhat controversial. Makes several contacts with the 16S rRNA in the 70S ribosome. In Orientia tsutsugamushi (strain Ikeda) (Rickettsia tsutsugamushi), this protein is Large ribosomal subunit protein uL2.